The primary structure comprises 217 residues: Peroxiredoxin (217 aa).

In terms of domain architecture, Thioredoxin spans 2–159 (PVIGEKFPEV…IVRLVKALQV (158 aa)). The Cysteine sulfenic acid (-SOH) intermediate role is filled by Cys-46. Arg-122 lines the substrate pocket. Cys-206 and Cys-212 are joined by a disulfide.

It belongs to the peroxiredoxin family. Prx6 subfamily. Homodecamer. Pentamer of dimers that assemble into a ring structure.

Its subcellular location is the cytoplasm. The catalysed reaction is a hydroperoxide + [thioredoxin]-dithiol = an alcohol + [thioredoxin]-disulfide + H2O. Thiol-specific peroxidase that catalyzes the reduction of hydrogen peroxide and organic hydroperoxides to water and alcohols, respectively. Plays a role in cell protection against oxidative stress by detoxifying peroxides. This Methanocaldococcus jannaschii (strain ATCC 43067 / DSM 2661 / JAL-1 / JCM 10045 / NBRC 100440) (Methanococcus jannaschii) protein is Peroxiredoxin.